Consider the following 273-residue polypeptide: tRNA pseudouridine synthase A (273 aa).

D52 (nucleophile) is an active-site residue. Y110 contributes to the substrate binding site.

Belongs to the tRNA pseudouridine synthase TruA family. As to quaternary structure, homodimer.

The catalysed reaction is uridine(38/39/40) in tRNA = pseudouridine(38/39/40) in tRNA. Its function is as follows. Formation of pseudouridine at positions 38, 39 and 40 in the anticodon stem and loop of transfer RNAs. The sequence is that of tRNA pseudouridine synthase A from Cupriavidus pinatubonensis (strain JMP 134 / LMG 1197) (Cupriavidus necator (strain JMP 134)).